The primary structure comprises 240 residues: Eukaryotic translation initiation factor 3 subunit J (240 aa).

The disordered stretch occupies residues 1–66 (MADDWESAAD…VPVKTKPSKA (66 aa)). Residues 27-45 (GEDDDDDVKESWEDEEEKK) are compositionally biased toward acidic residues.

Belongs to the eIF-3 subunit J family. In terms of assembly, component of the eukaryotic translation initiation factor 3 (eIF-3) complex. The eIF-3 complex interacts with pix.

It is found in the cytoplasm. Functionally, component of the eukaryotic translation initiation factor 3 (eIF-3) complex, which is involved in protein synthesis of a specialized repertoire of mRNAs and, together with other initiation factors, stimulates binding of mRNA and methionyl-tRNAi to the 40S ribosome. The eIF-3 complex specifically targets and initiates translation of a subset of mRNAs involved in cell proliferation. The protein is Eukaryotic translation initiation factor 3 subunit J of Drosophila persimilis (Fruit fly).